The chain runs to 501 residues: Cytochrome P450 6j1 (501 aa).

Cys444 is a heme binding site.

The protein belongs to the cytochrome P450 family. The cofactor is heme.

It localises to the endoplasmic reticulum membrane. The protein resides in the microsome membrane. This chain is Cytochrome P450 6j1 (CYP6J1), found in Blattella germanica (German cockroach).